The sequence spans 130 residues: Small ribosomal subunit protein uS11c (130 aa).

This sequence belongs to the universal ribosomal protein uS11 family. Part of the 30S ribosomal subunit.

It localises to the plastid. It is found in the chloroplast. The sequence is that of Small ribosomal subunit protein uS11c from Phaeodactylum tricornutum (strain CCAP 1055/1).